Consider the following 345-residue polypeptide: uncharacterized protein (345 aa).

Belongs to the proline racemase family.

This is an uncharacterized protein from Bacillus anthracis.